A 137-amino-acid chain; its full sequence is Large-conductance mechanosensitive channel (137 aa).

The next 2 helical transmembrane spans lie at 15 to 35 (VDLA…TSLV) and 81 to 101 (GKFI…FFVI).

Belongs to the MscL family. As to quaternary structure, homopentamer.

The protein localises to the cell inner membrane. Its function is as follows. Channel that opens in response to stretch forces in the membrane lipid bilayer. May participate in the regulation of osmotic pressure changes within the cell. The polypeptide is Large-conductance mechanosensitive channel (Hyphomonas neptunium (strain ATCC 15444)).